We begin with the raw amino-acid sequence, 61 residues long: UPF0181 protein MS1074 (61 aa).

This sequence belongs to the UPF0181 family.

The chain is UPF0181 protein MS1074 from Mannheimia succiniciproducens (strain KCTC 0769BP / MBEL55E).